Consider the following 264-residue polypeptide: Thymidylate synthase (264 aa).

R21 provides a ligand contact to dUMP. (6R)-5,10-methylene-5,6,7,8-tetrahydrofolate is bound at residue H51. DUMP is bound at residue 126–127 (RR). Residue C146 is the Nucleophile of the active site. DUMP-binding positions include 166-169 (RSAD), N177, and 207-209 (HLY). (6R)-5,10-methylene-5,6,7,8-tetrahydrofolate is bound at residue D169. S263 provides a ligand contact to (6R)-5,10-methylene-5,6,7,8-tetrahydrofolate.

This sequence belongs to the thymidylate synthase family. Bacterial-type ThyA subfamily. Homodimer.

Its subcellular location is the cytoplasm. The catalysed reaction is dUMP + (6R)-5,10-methylene-5,6,7,8-tetrahydrofolate = 7,8-dihydrofolate + dTMP. The protein operates within pyrimidine metabolism; dTTP biosynthesis. Catalyzes the reductive methylation of 2'-deoxyuridine-5'-monophosphate (dUMP) to 2'-deoxythymidine-5'-monophosphate (dTMP) while utilizing 5,10-methylenetetrahydrofolate (mTHF) as the methyl donor and reductant in the reaction, yielding dihydrofolate (DHF) as a by-product. This enzymatic reaction provides an intracellular de novo source of dTMP, an essential precursor for DNA biosynthesis. The chain is Thymidylate synthase from Neisseria meningitidis serogroup A / serotype 4A (strain DSM 15465 / Z2491).